We begin with the raw amino-acid sequence, 127 residues long: Methylglyoxal synthase (127 aa).

In terms of domain architecture, MGS-like spans 1–127 (MEGQRCIALI…ENLIDFNSAD (127 aa)). Substrate-binding positions include His-12, Lys-16, 38–41 (TGTT), and 59–60 (SG). The Proton donor/acceptor role is filled by Asp-65. His-92 contacts substrate.

It belongs to the methylglyoxal synthase family.

The catalysed reaction is dihydroxyacetone phosphate = methylglyoxal + phosphate. Catalyzes the formation of methylglyoxal from dihydroxyacetone phosphate. The sequence is that of Methylglyoxal synthase from Agrobacterium fabrum (strain C58 / ATCC 33970) (Agrobacterium tumefaciens (strain C58)).